A 392-amino-acid chain; its full sequence is Phosphoglycerate kinase (392 aa).

Substrate is bound by residues 21-23 (DFN), arginine 36, 59-62 (HLGR), arginine 113, and arginine 146. ATP contacts are provided by residues lysine 197, glutamate 319, and 345-348 (GGDT).

The protein belongs to the phosphoglycerate kinase family. In terms of assembly, monomer.

Its subcellular location is the cytoplasm. It carries out the reaction (2R)-3-phosphoglycerate + ATP = (2R)-3-phospho-glyceroyl phosphate + ADP. It participates in carbohydrate degradation; glycolysis; pyruvate from D-glyceraldehyde 3-phosphate: step 2/5. This chain is Phosphoglycerate kinase, found in Francisella philomiragia subsp. philomiragia (strain ATCC 25017 / CCUG 19701 / FSC 153 / O#319-036).